Here is a 324-residue protein sequence, read N- to C-terminus: uncharacterized protein (324 aa).

Helical transmembrane passes span 5–24, 39–61, 68–90, 95–117, 130–152, 162–179, 199–218, and 228–250; these read VIGI…NRAM, FIFM…PLLL, FYWI…FAAA, WLIA…LFYV, QKIP…LIQL, MLLF…AYPL, LGMT…YGWW, and TVQS…FWAT.

The protein resides in the cell membrane. This is an uncharacterized protein from Bacillus subtilis (strain 168).